A 437-amino-acid chain; its full sequence is Magnetosome protein MamN (437 aa).

11 helical membrane passes run 26-46 (LAVL…GSYT), 53-73 (SVYF…ALLA), 95-115 (WILV…NSLV), 136-156 (VPVI…TMIG), 174-194 (FIAG…VFFE), 226-246 (LLSY…LAGP), 252-268 (GWIA…LGRF), 281-301 (DILF…VGIL), 320-340 (AILL…GTSA), 358-378 (AAWW…LPGA), and 416-436 (WGMP…AVLV).

It belongs to the arsenite-antimonite (ArsB) efflux (TC 2.A.45) family.

Its subcellular location is the magnetosome membrane. Its function is as follows. Plays a role in biomineralization; might regulate pH in the magnetosome. The sequence is that of Magnetosome protein MamN (mamN) from Paramagnetospirillum magneticum (strain ATCC 700264 / AMB-1) (Magnetospirillum magneticum).